Consider the following 349-residue polypeptide: Protein-glutamate methylesterase/protein-glutamine glutaminase (349 aa).

The region spanning 5 to 122 (RVLSVDDSAL…REGMLAYNEM (118 aa)) is the Response regulatory domain. The residue at position 56 (Asp56) is a 4-aspartylphosphate. The 193-residue stretch at 152-344 (LLSSEKLIAI…QQMLAKISAG (193 aa)) folds into the CheB-type methylesterase domain. Active-site residues include Ser164, His190, and Asp286.

It belongs to the CheB family. Interacts with CheA. Binds to a C-terminal pentapeptide sequence carried by certain receptors. Phosphorylated by CheA. Phosphorylation of the N-terminal regulatory domain activates the methylesterase activity.

It is found in the cytoplasm. The catalysed reaction is [protein]-L-glutamate 5-O-methyl ester + H2O = L-glutamyl-[protein] + methanol + H(+). It carries out the reaction L-glutaminyl-[protein] + H2O = L-glutamyl-[protein] + NH4(+). With respect to regulation, methylesterase activity is activated via phosphorylation in response to negative chemotactic stimuli and is inhibited in the presence of attractants. Activation requires both CheA and CheW. Functionally, involved in chemotaxis. Part of a chemotaxis signal transduction system that modulates chemotaxis in response to various stimuli. Catalyzes the demethylation of specific methylglutamate residues introduced into the chemoreceptors (methyl-accepting chemotaxis proteins or MCP) by CheR. Also mediates the irreversible deamidation of specific glutamine residues to glutamic acid. Catalyzes its own deactivation by removing the activating phosphoryl group. This is Protein-glutamate methylesterase/protein-glutamine glutaminase from Escherichia coli (strain K12).